We begin with the raw amino-acid sequence, 373 residues long: Chorismate synthase (373 aa).

Arginine 46 lines the NADP(+) pocket. Residues 123 to 125, 250 to 251, glycine 295, 310 to 314, and arginine 337 each bind FMN; these read RSS, NA, and KPTPS.

Belongs to the chorismate synthase family. The cofactor is FMNH2.

It catalyses the reaction 5-O-(1-carboxyvinyl)-3-phosphoshikimate = chorismate + phosphate. It participates in metabolic intermediate biosynthesis; chorismate biosynthesis; chorismate from D-erythrose 4-phosphate and phosphoenolpyruvate: step 7/7. Functionally, catalyzes the anti-1,4-elimination of the C-3 phosphate and the C-6 proR hydrogen from 5-enolpyruvylshikimate-3-phosphate (EPSP) to yield chorismate, which is the branch point compound that serves as the starting substrate for the three terminal pathways of aromatic amino acid biosynthesis. This reaction introduces a second double bond into the aromatic ring system. In Methanococcus aeolicus (strain ATCC BAA-1280 / DSM 17508 / OCM 812 / Nankai-3), this protein is Chorismate synthase.